We begin with the raw amino-acid sequence, 160 residues long: Twist-related protein 2 (160 aa).

Residues Met-1–Glu-63 are disordered. Positions Lys-27–Lys-37 are enriched in basic residues. In terms of domain architecture, bHLH spans Ser-66–Leu-117.

Efficient DNA binding requires dimerization with another bHLH protein. Forms a heterodimer with TCF3/E12. Also interacts with MEF2C. In terms of tissue distribution, expressed at low levels in sclerotome and dermatome of somites, and in limb buds at 10.5 dpc. Accumulates predominantly in dermatome, prevertebrae and derivatives of branchial arches by 13 dpc. Also expressed near surface of embryo and in chondrogenic cells. In adult, expressed at low levels in skin, bladder, uterus, aorta and heart.

Its subcellular location is the nucleus. It localises to the cytoplasm. In terms of biological role, binds to the E-box consensus sequence 5'-CANNTG-3' as a heterodimer and inhibits transcriptional activation by MYOD1, MYOG, MEF2A and MEF2C. Also represses expression of pro-inflammatory cytokines such as TNFA and IL1B. Involved in postnatal glycogen storage and energy metabolism. Inhibits the premature or ectopic differentiation of preosteoblast cells during osteogenesis, possibly by changing the internal signal transduction response of osteoblasts to external growth factors. This is Twist-related protein 2 (Twist2) from Mus musculus (Mouse).